Here is a 235-residue protein sequence, read N- to C-terminus: Lipoprotein-releasing system ATP-binding protein LolD (235 aa).

An ABC transporter domain is found at 13 to 235 (LCCSNIIKRY…SNGMLKISTI (223 aa)). An ATP-binding site is contributed by 49–56 (GASGSGKS).

Belongs to the ABC transporter superfamily. Lipoprotein translocase (TC 3.A.1.125) family. In terms of assembly, the complex is composed of two ATP-binding proteins (LolD) and two transmembrane proteins (LolC and LolE).

It localises to the cell inner membrane. Part of the ABC transporter complex LolCDE involved in the translocation of mature outer membrane-directed lipoproteins, from the inner membrane to the periplasmic chaperone, LolA. Responsible for the formation of the LolA-lipoprotein complex in an ATP-dependent manner. The protein is Lipoprotein-releasing system ATP-binding protein LolD of Blochmanniella floridana.